The primary structure comprises 351 residues: 3-dehydroquinate synthase (351 aa).

Residues 60–65 (DGEEYK), 94–98 (GVISD), 118–119 (TT), Lys131, Lys140, and 158–161 (FLKT) each bind NAD(+). Zn(2+) is bound by residues Glu173, His239, and His256.

This sequence belongs to the sugar phosphate cyclases superfamily. Dehydroquinate synthase family. It depends on Co(2+) as a cofactor. Zn(2+) is required as a cofactor. Requires NAD(+) as cofactor.

The protein resides in the cytoplasm. It carries out the reaction 7-phospho-2-dehydro-3-deoxy-D-arabino-heptonate = 3-dehydroquinate + phosphate. It functions in the pathway metabolic intermediate biosynthesis; chorismate biosynthesis; chorismate from D-erythrose 4-phosphate and phosphoenolpyruvate: step 2/7. Catalyzes the conversion of 3-deoxy-D-arabino-heptulosonate 7-phosphate (DAHP) to dehydroquinate (DHQ). In Campylobacter jejuni subsp. doylei (strain ATCC BAA-1458 / RM4099 / 269.97), this protein is 3-dehydroquinate synthase.